An 81-amino-acid polypeptide reads, in one-letter code: U10-myrmicitoxin-Mri1b (81 aa).

An N-terminal signal peptide occupies residues 1 to 26; it reads MRLSYISLTLAIIFVMAIVHAPETEA. A propeptide spanning residues 27 to 52 is cleaved from the precursor; it reads KAYPEADAVAEAIAVGEADAVGVADP. Valine amide is present on Val80.

It belongs to the formicidae venom precursor-01 superfamily. As to expression, expressed by the venom gland.

It is found in the secreted. Functionally, induces paralysis after injection into blowflies (L.caesar), and then death within 24 hours. May have antimicrobial properties, like most ant linear peptides. The protein is U10-myrmicitoxin-Mri1b of Manica rubida (European giant red ant).